A 126-amino-acid polypeptide reads, in one-letter code: Ribulose bisphosphate carboxylase small subunit, chloroplastic 1 (126 aa).

Belongs to the RuBisCO small chain family. In terms of assembly, heterohexadecamer of 8 large and 8 small subunits.

The protein localises to the plastid. It localises to the chloroplast. Its function is as follows. RuBisCO catalyzes two reactions: the carboxylation of D-ribulose 1,5-bisphosphate, the primary event in carbon dioxide fixation, as well as the oxidative fragmentation of the pentose substrate. Both reactions occur simultaneously and in competition at the same active site. Although the small subunit is not catalytic it is essential for maximal activity. This chain is Ribulose bisphosphate carboxylase small subunit, chloroplastic 1, found in Acetabularia peniculus (Green alga).